Reading from the N-terminus, the 279-residue chain is Thymidylate synthase (279 aa).

Position 133–134 (133–134 (RR)) interacts with dUMP. The active-site Nucleophile is Cys-154. DUMP-binding positions include 178-181 (RSND), Asn-189, and 219-221 (HIY). Asp-181 is a (6R)-5,10-methylene-5,6,7,8-tetrahydrofolate binding site. Ala-278 provides a ligand contact to (6R)-5,10-methylene-5,6,7,8-tetrahydrofolate.

This sequence belongs to the thymidylate synthase family. Bacterial-type ThyA subfamily. Homodimer.

It localises to the cytoplasm. The enzyme catalyses dUMP + (6R)-5,10-methylene-5,6,7,8-tetrahydrofolate = 7,8-dihydrofolate + dTMP. It participates in pyrimidine metabolism; dTTP biosynthesis. In terms of biological role, catalyzes the reductive methylation of 2'-deoxyuridine-5'-monophosphate (dUMP) to 2'-deoxythymidine-5'-monophosphate (dTMP) while utilizing 5,10-methylenetetrahydrofolate (mTHF) as the methyl donor and reductant in the reaction, yielding dihydrofolate (DHF) as a by-product. This enzymatic reaction provides an intracellular de novo source of dTMP, an essential precursor for DNA biosynthesis. The protein is Thymidylate synthase of Streptococcus agalactiae serotype Ia (strain ATCC 27591 / A909 / CDC SS700).